The sequence spans 278 residues: MLSKRGLNPVQAESRKKKKREQIKVREERAKRHEERLSHRNMSQMERQLSELTQLESSQALNAHDKQLLQNLQRDMAIMKKKNIHGHRVGRVESDKTKEAERQHKPRKPFIPKNPKRSIYYDPIFNPYGVPPPGMPYREKEELSSETDESVIDIPLPSEEYPFEDPKPREKKNKSFKPKHHKKQDINASSAQPKSTTTTEAAANTKDIEEETMIEYSAQPVVRDLRQEAAQFLPAAFQRQKLAKGQKIGQPDRDVSSQVQEDKDEEIDNFYKEIGGYL.

3 disordered regions span residues 1 to 43 (MLSK…RNMS), 81 to 210 (KKNI…DIEE), and 240 to 264 (QKLA…EDKD). Composition is skewed to basic and acidic residues over residues 22–38 (QIKV…ERLS) and 90–103 (GRVE…AERQ). Basic residues-rich tracts occupy residues 104–116 (HKPR…KNPK) and 169–183 (REKK…HHKK). Positions 186-202 (INASSAQPKSTTTTEAA) are enriched in polar residues.

It is found in the nucleus. The protein resides in the nucleolus. This Schizosaccharomyces pombe (strain 972 / ATCC 24843) (Fission yeast) protein is Protein saf1 (saf1).